A 249-amino-acid polypeptide reads, in one-letter code: Transmembrane protein 150C (249 aa).

The Cytoplasmic portion of the chain corresponds to 1–9; sequence MDGKKCSVW. The helical transmembrane segment at 10–30 threads the bilayer; the sequence is MFLPLVFTLFTSAGLWIVYFI. Residues 31-64 lie on the Extracellular side of the membrane; the sequence is AVEDDKILPLNSAARKSGVKHAPYISFAGDDPPA. Residues 65 to 85 form a helical membrane-spanning segment; the sequence is SCVFSQVMNMAAFLALVVAVL. The Cytoplasmic portion of the chain corresponds to 86 to 97; sequence RFIQLKPKVLNP. A helical membrane pass occupies residues 98–118; that stretch reads WLNISGLVALCLASFGMTLLG. The Extracellular segment spans residues 119 to 130; it reads NFQLTNDEEIHN. Residues 131-151 traverse the membrane as a helical segment; it reads VGTSLTFGFGTLTCWIQAALT. Residues 152 to 168 are Cytoplasmic-facing; sequence LKVNIKNEGRRAGIPRV. A helical membrane pass occupies residues 169–189; that stretch reads ILSAVITLCVVLYFILMAQDI. Residues 190–192 are Extracellular-facing; sequence HMY. A helical membrane pass occupies residues 193-213; that stretch reads AARVQWGLVMCFLAYFGTLAV. Topologically, residues 214-249 are cytoplasmic; it reads EFRHYRYEIVCSEYQENFLSFSESLSEASEYQTDQV.

The protein belongs to the DRAM/TMEM150 family.

Its subcellular location is the cell membrane. It localises to the lysosome membrane. It carries out the reaction Ca(2+)(in) = Ca(2+)(out). The catalysed reaction is Na(+)(in) = Na(+)(out). It catalyses the reaction K(+)(in) = K(+)(out). The enzyme catalyses Mg(2+)(in) = Mg(2+)(out). Nonselective cationic channel with high permeability to Ca(2+). Component of a mechanosensitive cation channel. Confers mechanically activated (MA) currents with slow inactivation kinetics. May contribute to proprioception. The sequence is that of Transmembrane protein 150C (Tmem150c) from Rattus norvegicus (Rat).